Reading from the N-terminus, the 323-residue chain is Lipoyl synthase (323 aa).

7 residues coordinate [4Fe-4S] cluster: Cys-56, Cys-61, Cys-67, Cys-82, Cys-86, Cys-89, and Ser-293. The Radical SAM core domain maps to 68 to 282 (WEDREATFLI…AAEARELGFA (215 aa)).

It belongs to the radical SAM superfamily. Lipoyl synthase family. It depends on [4Fe-4S] cluster as a cofactor.

Its subcellular location is the cytoplasm. It carries out the reaction [[Fe-S] cluster scaffold protein carrying a second [4Fe-4S](2+) cluster] + N(6)-octanoyl-L-lysyl-[protein] + 2 oxidized [2Fe-2S]-[ferredoxin] + 2 S-adenosyl-L-methionine + 4 H(+) = [[Fe-S] cluster scaffold protein] + N(6)-[(R)-dihydrolipoyl]-L-lysyl-[protein] + 4 Fe(3+) + 2 hydrogen sulfide + 2 5'-deoxyadenosine + 2 L-methionine + 2 reduced [2Fe-2S]-[ferredoxin]. It functions in the pathway protein modification; protein lipoylation via endogenous pathway; protein N(6)-(lipoyl)lysine from octanoyl-[acyl-carrier-protein]: step 2/2. In terms of biological role, catalyzes the radical-mediated insertion of two sulfur atoms into the C-6 and C-8 positions of the octanoyl moiety bound to the lipoyl domains of lipoate-dependent enzymes, thereby converting the octanoylated domains into lipoylated derivatives. The polypeptide is Lipoyl synthase (Acidothermus cellulolyticus (strain ATCC 43068 / DSM 8971 / 11B)).